The primary structure comprises 233 residues: Glutathione S-transferase 2 (233 aa).

The 85-residue stretch at 17 to 101 (QKMIIYDTPA…YIDALDGTPT (85 aa)) folds into the GST N-terminal domain. Glutathione contacts are provided by residues Tyr-29, His-58, Val-72, 85-86 (EC), and His-133. One can recognise a GST C-terminal domain in the interval 106-233 (TPLEKGVIHM…KLLEIRSKSS (128 aa)).

The protein belongs to the GST superfamily. As to quaternary structure, homodimer.

It catalyses the reaction RX + glutathione = an S-substituted glutathione + a halide anion + H(+). This is Glutathione S-transferase 2 (GTT2) from Saccharomyces cerevisiae (strain ATCC 204508 / S288c) (Baker's yeast).